Here is a 65-residue protein sequence, read N- to C-terminus: Large ribosomal subunit protein bL35 (65 aa).

The protein belongs to the bacterial ribosomal protein bL35 family.

The sequence is that of Large ribosomal subunit protein bL35 from Thermoanaerobacter sp. (strain X514).